The sequence spans 287 residues: Acetylglutamate kinase (287 aa).

Residues 70–71 (GG), arginine 92, and asparagine 184 each bind substrate.

It belongs to the acetylglutamate kinase family. ArgB subfamily.

It localises to the cytoplasm. It catalyses the reaction N-acetyl-L-glutamate + ATP = N-acetyl-L-glutamyl 5-phosphate + ADP. It functions in the pathway amino-acid biosynthesis; L-arginine biosynthesis; N(2)-acetyl-L-ornithine from L-glutamate: step 2/4. Its function is as follows. Catalyzes the ATP-dependent phosphorylation of N-acetyl-L-glutamate. The sequence is that of Acetylglutamate kinase from Roseobacter denitrificans (strain ATCC 33942 / OCh 114) (Erythrobacter sp. (strain OCh 114)).